Here is a 558-residue protein sequence, read N- to C-terminus: Putative transport protein VC0395_A0715/VC395_1212 (558 aa).

Transmembrane regions (helical) follow at residues 5–25 (VVLL…AIGL), 37–57 (LGNS…GFSF), 66–86 (FMLF…GIFF), 92–112 (YLIL…FGGY), and 164–184 (VGYA…AKLL). RCK C-terminal domains lie at 203-290 (RGLG…FRNG) and 291-374 (KEVF…KIGF). Helical transmembrane passes span 384 to 404 (LLAF…TMTF), 407 to 427 (VSFS…LGFL), 441 to 461 (ALNM…GLNA), 476 to 496 (VIGL…LVGA), 504 to 524 (ALLF…DVVN), and 537 to 557 (AGTY…FILL).

The protein belongs to the AAE transporter (TC 2.A.81) family. YbjL subfamily.

Its subcellular location is the cell membrane. The sequence is that of Putative transport protein VC0395_A0715/VC395_1212 from Vibrio cholerae serotype O1 (strain ATCC 39541 / Classical Ogawa 395 / O395).